The following is a 151-amino-acid chain: Protein Turandot Z (151 aa).

The signal sequence occupies residues 1 to 23 (MSRLIHLSFVLALLACLTGPISA).

Belongs to the Turandot family.

Its subcellular location is the secreted. Functionally, a humoral factor that may play a role in stress tolerance. The chain is Protein Turandot Z from Drosophila pseudoobscura pseudoobscura (Fruit fly).